The chain runs to 469 residues: Mitochondrial distribution and morphology protein 10 (469 aa).

The protein belongs to the MDM10 family. Component of the ER-mitochondria encounter structure (ERMES) or MDM complex, composed of MMM1, MDM10, MDM12 and MDM34. Associates with the mitochondrial outer membrane sorting assembly machinery SAM(core) complex.

The protein resides in the mitochondrion outer membrane. Its function is as follows. Component of the ERMES/MDM complex, which serves as a molecular tether to connect the endoplasmic reticulum and mitochondria. Components of this complex are involved in the control of mitochondrial shape and protein biogenesis and may function in phospholipid exchange. MDM10 is involved in the late assembly steps of the general translocase of the mitochondrial outer membrane (TOM complex). Functions in the TOM40-specific route of the assembly of outer membrane beta-barrel proteins, including the association of TOM40 with the receptor TOM22 and small TOM proteins. Can associate with the SAM(core) complex as well as the MDM12-MMM1 complex, both involved in late steps of the major beta-barrel assembly pathway, that is responsible for biogenesis of all outer membrane beta-barrel proteins. May act as a switch that shuttles between both complexes and channels precursor proteins into the TOM40-specific pathway. Plays a role in mitochondrial morphology and in the inheritance of mitochondria. This chain is Mitochondrial distribution and morphology protein 10, found in Scheffersomyces stipitis (strain ATCC 58785 / CBS 6054 / NBRC 10063 / NRRL Y-11545) (Yeast).